The following is a 346-amino-acid chain: mRNA endoribonuclease LsoA (346 aa).

As to quaternary structure, can form a complex with cognate antitoxin LsoB and with enterobacteria phage T4 antitoxin Dmd.

Toxic component of a type II toxin-antitoxin (TA) system. A stable (half-life over 20 minutes) endoribonuclease that degrades mRNA. Degradation may be translation-stimulated. Overexpression in the absence of cognate antitoxin LsoB causes retarded growth and mRNA degradation, this effect is mitigated upon coexpression with antitoxin LsoB or enterobacteria phage T4 Dmd. Degrades late enterobacteria phage T4 mRNAs, protecting the host against T4 reproduction. The protein is mRNA endoribonuclease LsoA (lsoA) of Escherichia coli O157:H7.